We begin with the raw amino-acid sequence, 431 residues long: ABSCISIC ACID-INSENSITIVE 5-like protein 7 (431 aa).

Residues 1–29 (MGTHINFNNLGGGGHPGGEGSSNQMKPTG) are disordered. A compositionally biased stretch (gly residues) spans 10-20 (LGGGGHPGGEG). Phosphoserine is present on residues S39 and S61. Residue S110 is modified to Phosphoserine; by CPK32. The segment at 133–153 (DGNMEGSSGGGGESNVPPGRQ) is disordered. T155 is subject to Phosphothreonine. Polar residues predominate over residues 319 to 331 (SPGTSSAENNSLS). The segment at 319–338 (SPGTSSAENNSLSPVPYVLN) is disordered. The Nuclear localization signal signature appears at 340–347 (GRRSNTGL). Residues 351–414 (IERRQRRMIK…KNELKETSKR (64 aa)) form the bZIP domain. A basic motif region spans residues 353 to 372 (RRQRRMIKNRESAARSRARK). The stretch at 372-411 (KQAYTLELEAEIEKLKKTNQELQKKQAEMVEMQKNELKET) forms a coiled coil. Residues 379-393 (LEAEIEKLKKTNQEL) form a leucine-zipper region.

This sequence belongs to the bZIP family. ABI5 subfamily. As to quaternary structure, DNA-binding heterodimer. Interacts with CPK32 and the AFP proteins AFP1, AFP2 and AFP3. Interacts with FREE1 (via C-terminus). In terms of processing, phosphorylated by CPK4 and CPK11 in vitro. Expressed in roots, leaves, flowers and immatures siliques.

Its subcellular location is the nucleus. In terms of biological role, functions as a transcriptional activator in the ABA-inducible expression of LTI65/RD29B (AC Q04980). Binds specifically to the ABA-responsive element (ABRE) of the LTI65/RD29B (AC Q04980) gene promoter. Binds to the promoter of FREE1 and activates its transcription. The sequence is that of ABSCISIC ACID-INSENSITIVE 5-like protein 7 from Arabidopsis thaliana (Mouse-ear cress).